The chain runs to 435 residues: Adenylosuccinate synthetase (435 aa).

GTP-binding positions include 22 to 28 (GDEGKGK) and 50 to 52 (GHT). Aspartate 23 (proton acceptor) is an active-site residue. Aspartate 23 and glycine 50 together coordinate Mg(2+). Residues 23-26 (DEGK), 48-51 (NAGH), threonine 140, arginine 154, glutamine 235, threonine 250, and arginine 314 each bind IMP. Histidine 51 acts as the Proton donor in catalysis. Residue 310-316 (ATTGRKR) participates in substrate binding. Residues arginine 316, 342–344 (KLD), and 424–426 (SVG) contribute to the GTP site.

The protein belongs to the adenylosuccinate synthetase family. In terms of assembly, homodimer. The cofactor is Mg(2+).

Its subcellular location is the cytoplasm. The catalysed reaction is IMP + L-aspartate + GTP = N(6)-(1,2-dicarboxyethyl)-AMP + GDP + phosphate + 2 H(+). It participates in purine metabolism; AMP biosynthesis via de novo pathway; AMP from IMP: step 1/2. Its function is as follows. Plays an important role in the de novo pathway of purine nucleotide biosynthesis. Catalyzes the first committed step in the biosynthesis of AMP from IMP. This chain is Adenylosuccinate synthetase, found in Chlorobaculum parvum (strain DSM 263 / NCIMB 8327) (Chlorobium vibrioforme subsp. thiosulfatophilum).